A 465-amino-acid polypeptide reads, in one-letter code: Kynureninase (465 aa).

Residue methionine 1 is modified to N-acetylmethionine. Residues leucine 137, threonine 138, 165-168 (FPSD), serine 221, aspartate 250, histidine 253, and tyrosine 275 each bind pyridoxal 5'-phosphate. An N6-(pyridoxal phosphate)lysine modification is found at lysine 276. Pyridoxal 5'-phosphate is bound by residues tryptophan 305 and asparagine 333.

The protein belongs to the kynureninase family. Homodimer. Requires pyridoxal 5'-phosphate as cofactor. As to expression, expressed in all tissues tested (heart, brain placenta, lung, liver, skeletal muscle, kidney and pancreas). Highest levels found in placenta, liver and lung. Expressed in all brain regions.

The protein resides in the cytoplasm. Its subcellular location is the cytosol. The catalysed reaction is L-kynurenine + H2O = anthranilate + L-alanine + H(+). It catalyses the reaction 3-hydroxy-L-kynurenine + H2O = 3-hydroxyanthranilate + L-alanine + H(+). It participates in amino-acid degradation; L-kynurenine degradation; L-alanine and anthranilate from L-kynurenine: step 1/1. Its pathway is cofactor biosynthesis; NAD(+) biosynthesis; quinolinate from L-kynurenine: step 2/3. With respect to regulation, inhibited by o-methoxybenzoylalanine (OMBA). Its function is as follows. Catalyzes the cleavage of L-kynurenine (L-Kyn) and L-3-hydroxykynurenine (L-3OHKyn) into anthranilic acid (AA) and 3-hydroxyanthranilic acid (3-OHAA), respectively. Has a preference for the L-3-hydroxy form. Also has cysteine-conjugate-beta-lyase activity. The protein is Kynureninase of Homo sapiens (Human).